A 182-amino-acid polypeptide reads, in one-letter code: CDP-diacylglycerol--glycerol-3-phosphate 3-phosphatidyltransferase (182 aa).

At 1–12 (MQLNIPTWLTLF) the chain is on the cytoplasmic side. A helical transmembrane segment spans residues 13-37 (RVVLIPFFVLAFYLPFVWAPMVCAI). Topologically, residues 38–60 (IFVFAAATDWFDGFLARRWKQTT) are periplasmic. A helical transmembrane segment spans residues 61-81 (RFGAFLDPVADKVMVAVALVL). At 82 to 86 (VAEHY) the chain is on the cytoplasmic side. The helical transmembrane segment at 87-107 (HSWWITLPAATMIAREIIISS) threads the bilayer. The Periplasmic segment spans residues 108–145 (LREWMAEIGKRSSVAVSWVGKVKTMAQMGSLVGLLWRP). A helical membrane pass occupies residues 146–168 (DHNVELASFVLLYIAAVLTFWSM). The Cytoplasmic segment spans residues 169-181 (FQYLNAAWSDLLE).

It belongs to the CDP-alcohol phosphatidyltransferase class-I family.

It is found in the cell inner membrane. The catalysed reaction is a CDP-1,2-diacyl-sn-glycerol + sn-glycerol 3-phosphate = a 1,2-diacyl-sn-glycero-3-phospho-(1'-sn-glycero-3'-phosphate) + CMP + H(+). It participates in phospholipid metabolism; phosphatidylglycerol biosynthesis; phosphatidylglycerol from CDP-diacylglycerol: step 1/2. Functionally, catalyzes the conversion of cytidine diphosphate diacylglycerol (CDP-DG) and glycerol 3-phosphate into phosphatidylglycerol. Essential for the synthesis of anionic phospholipids, thereby playing a role in balancing the ratio of zwitterionic and anionic phospholipids, which is thought to be important for normal membrane function. The polypeptide is CDP-diacylglycerol--glycerol-3-phosphate 3-phosphatidyltransferase (Yersinia pestis bv. Antiqua (strain Antiqua)).